The primary structure comprises 374 residues: Histone acetyltransferase type B catalytic subunit (374 aa).

Interaction with histone H4 N-terminus stretches follow at residues 42 to 44 and 194 to 196; these read DSE and YKY. Residues 135–303 form the N-acetyltransferase domain; the sequence is VVYKSSLVDD…ESSRKSLKLE (169 aa). The interval 197–205 is interaction with HAT2; the sequence is WHYLGAKSF. Acetyl-CoA-binding positions include 220 to 222 and 227 to 233; these read FLI and QNKGHGS. Residue E255 is the Proton donor/acceptor of the active site. Residues N258 and R267 each coordinate acetyl-CoA. S354 carries the phosphoserine modification.

Belongs to the HAT1 family. In terms of assembly, component of the HAT-B complex composed of at least HAT1 and HAT2. In the cytoplasm, this complex binds to the histone H4 tail. In the nucleus, the HAT-B complex has an additional component, the histone H3/H4 chaperone HIF1.

It localises to the cytoplasm. The protein resides in the nucleus. It carries out the reaction L-lysyl-[protein] + acetyl-CoA = N(6)-acetyl-L-lysyl-[protein] + CoA + H(+). Catalytic component of the histone acetylase B (HAT-B) complex. Acetylates 'Lys-12' of free histone H4 in the cytoplasm. The complex is also found in the nucleus, however it is not certain that it modifies histone H4 when packaged in chromatin. Histone H4 'Lys-12' acetylation is required for telomeric silencing. Has intrinsic substrate specificity that modifies lysine in recognition sequence GXGKXG. Involved in DNA double-strand break repair. This is Histone acetyltransferase type B catalytic subunit (HAT1) from Saccharomyces cerevisiae (strain ATCC 204508 / S288c) (Baker's yeast).